A 557-amino-acid polypeptide reads, in one-letter code: MSNSNQPLLSKPKSLKHKNLCLVLSFVAILGSVAFFTAQLISVNTNNNDDSLLTTSQICHGAHDQDSCQALLSEFTTLSLSKLNRLDLLHVFLKNSVWRLESTMTMVSEARIRSNGVRDKAGFADCEEMMDVSKDRMMSSMEELRGGNYNLESYSNVHTWLSSVLTNYMTCLESISDVSVNSKQIVKPQLEDLVSRARVALAIFVSVLPARDDLKMIISNRFPSWLTALDRKLLESSPKTLKVTANVVVAKDGTGKFKTVNEAVAAAPENSNTRYVIYVKKGVYKETIDIGKKKKNLMLVGDGKDATIITGSLNVIDGSTTFRSATVAANGDGFMAQDIWFQNTAGPAKHQAVALRVSADQTVINRCRIDAYQDTLYTHTLRQFYRDSYITGTVDFIFGNSAVVFQNCDIVARNPGAGQKNMLTAQGREDQNQNTAISIQKCKITASSDLAPVKGSVKTFLGRPWKLYSRTVIMQSFIDNHIDPAGWFPWDGEFALSTLYYGEYANTGPGADTSKRVNWKGFKVIKDSKEAEQFTVAKLIQGGLWLKPTGVTFQEWL.

Residues 1–34 form the signal peptide; the sequence is MSNSNQPLLSKPKSLKHKNLCLVLSFVAILGSVA. Positions 47-203 are pectinesterase inhibitor 18; the sequence is NNDDSLLTTS…VSRARVALAI (157 aa). The pectinesterase 18 stretch occupies residues 246-543; that stretch reads NVVVAKDGTG…FTVAKLIQGG (298 aa). Residues Thr321 and Gln351 each contribute to the substrate site. The active-site Proton donor; for pectinesterase activity is the Asp374. Asp395 acts as the Nucleophile; for pectinesterase activity in catalysis. 2 residues coordinate substrate: Arg463 and Trp465.

This sequence in the N-terminal section; belongs to the PMEI family. It in the C-terminal section; belongs to the pectinesterase family. As to expression, expressed in siliques, flowers, floral stems, rosette leaves and roots.

The protein localises to the secreted. It is found in the cell wall. The enzyme catalyses [(1-&gt;4)-alpha-D-galacturonosyl methyl ester](n) + n H2O = [(1-&gt;4)-alpha-D-galacturonosyl](n) + n methanol + n H(+). It catalyses the reaction Endohydrolysis of the N-glycosidic bond at one specific adenosine on the 28S rRNA.. The protein operates within glycan metabolism; pectin degradation; 2-dehydro-3-deoxy-D-gluconate from pectin: step 1/5. Its function is as follows. Acts in the modification of cell walls via demethylesterification of cell wall pectin. Inhibits the elongation phase of protein synthesis. This is Pectinesterase/pectinesterase inhibitor 18 (PME18) from Arabidopsis thaliana (Mouse-ear cress).